An 84-amino-acid chain; its full sequence is Polyketide-8 synthase acyl carrier protein 1 (84 aa).

One can recognise a Carrier domain in the interval A7–A82. O-(pantetheine 4'-phosphoryl)serine is present on S42.

Post-translationally, 4'-phosphopantetheine is transferred from CoA to a specific serine of the apo-ACP-like protein.

Functionally, acyl carrier protein. The sequence is that of Polyketide-8 synthase acyl carrier protein 1 from Streptomyces avermitilis (strain ATCC 31267 / DSM 46492 / JCM 5070 / NBRC 14893 / NCIMB 12804 / NRRL 8165 / MA-4680).